The chain runs to 356 residues: Protein RecA (356 aa).

Residue 78–85 (GPESSGKT) participates in ATP binding.

The protein belongs to the RecA family.

The protein localises to the cytoplasm. In terms of biological role, can catalyze the hydrolysis of ATP in the presence of single-stranded DNA, the ATP-dependent uptake of single-stranded DNA by duplex DNA, and the ATP-dependent hybridization of homologous single-stranded DNAs. It interacts with LexA causing its activation and leading to its autocatalytic cleavage. In Paracoccus denitrificans, this protein is Protein RecA.